The following is a 1610-amino-acid chain: Voltage-dependent L-type calcium channel subunit alpha-1D (1610 aa).

The tract at residues 1-99 (MMMMMMKKMQ…SKKQGNSSNS (99 aa)) is disordered. Over 1-125 (MMMMMMKKMQ…RACISIVEWK (125 aa)) the chain is Cytoplasmic. Residues 37–51 (GPTSQPNSSKQTVLS) show a composition bias toward polar residues. Over residues 53-66 (QAAIDAARQAKAAQ) the composition is skewed to low complexity. Over residues 81 to 92 (QRKRQQYAKSKK) the composition is skewed to basic residues. The stretch at 112-408 (NPIRRACISI…LVLGVLSGEF (297 aa)) is one I repeat. The helical transmembrane segment at 126 to 144 (PFDIFILLAIFANCVALAI) threads the bilayer. The Extracellular portion of the chain corresponds to 145–162 (YIPFPEDDSNSTNHNLEK). Asparagine 154 carries N-linked (GlcNAc...) asparagine glycosylation. The chain crosses the membrane as a helical span at residues 163–182 (VEYAFLIIFTVETFLKIIAY). Residues 183–194 (GLLLHPNAYVRN) are Cytoplasmic-facing. A helical transmembrane segment spans residues 195-213 (GWNLLDFVIVIVGLFSVIL). At 214–234 (EQLTKETEGGNHSSGKSGGFD) the chain is on the extracellular side. Residue asparagine 224 is glycosylated (N-linked (GlcNAc...) asparagine). A helical membrane pass occupies residues 235 to 253 (VKALRAFRVLRPLRLVSGV). Over 254–272 (PSLQVVLNSIIKAMVPLLH) the chain is Cytoplasmic. The helical transmembrane segment at 273-292 (IALLVLFVIIIYAIIGLELF) threads the bilayer. Residues 293 to 380 (IGKMHKTCFF…WMNDAMGFEL (88 aa)) lie on the Extracellular side of the membrane. Asparagine 328 carries an N-linked (GlcNAc...) asparagine glycan. Glutamate 363 lines the Ca(2+) pocket. Residues 381 to 405 (PWVYFVSLVIFGSFFVLNLVLGVLS) traverse the membrane as a helical segment. At 406 to 522 (GEFSKEREKA…RRCRAAVKSV (117 aa)) the chain is on the cytoplasmic side. A binding to the beta subunit region spans residues 428–445 (EQLEEDLKGYLDWITQAE). A disordered region spans residues 448–487 (DPENEEEGGEEGKRNTSMPTSETESVNTENVSGEGETQGS). A compositionally biased stretch (polar residues) spans 462–487 (NTSMPTSETESVNTENVSGEGETQGS). An II repeat occupies 508 to 754 (NRFNRRRCRA…VFLAIAVDNL (247 aa)). Residues 523 to 542 (TFYWLVIVLVFLNTLTISSE) traverse the membrane as a helical segment. Over 543 to 557 (HYNQPDWLTQIQDIA) the chain is Extracellular. Residues 558–576 (NKVLLALFTCEMLVKMYSL) form a helical membrane-spanning segment. Residues 577 to 584 (GLQAYFVS) are Cytoplasmic-facing. Residues 585-603 (LFNRFDCFVVCGGITETIL) traverse the membrane as a helical segment. Topologically, residues 604–613 (VELELMSPLG) are extracellular. A helical transmembrane segment spans residues 614–632 (VSVFRCVRLLRIFKVTRHW). The Cytoplasmic segment spans residues 633-651 (TSLSNLVASLLNSMKSIAS). Residues 652 to 672 (LLLLLFLFIIIFSLLGMQLFG) traverse the membrane as a helical segment. At 673–726 (GKFNFDETQTKRSTFDNFPQALLTVFQILTGEDWNAVMYDGIMAYGGPSSSGMI) the chain is on the extracellular side. Glutamate 704 is a Ca(2+) binding site. Residues 727–751 (VCIYFIILFICGNYILLNVFLAIAV) form a helical membrane-spanning segment. Residues 752–884 (DNLADAESLN…VGCHKLINHH (133 aa)) are Cytoplasmic-facing. A compositionally biased stretch (basic and acidic residues) spans 765–789 (KEEAEEKERKKIARKESLENKKNNK). The segment at 765–846 (KEEAEEKERK…VPAGPRPRRI (82 aa)) is disordered. A compositionally biased stretch (polar residues) spans 790–801 (PEVNQIANSDNK). Positions 824 to 836 (VGEEEEEEEEEPE) are enriched in acidic residues. An III repeat occupies 871-1153 (NPIRVGCHKL…IFVGFVIVTF (283 aa)). A helical membrane pass occupies residues 885–903 (IFTNLILVFIMLSSAALAA). The Extracellular segment spans residues 904–919 (EDPIRSHSFRNTILGY). Residues 920–939 (FDYAFTAIFTVEILLKMTTF) form a helical membrane-spanning segment. Topologically, residues 940 to 951 (GAFLHKGAFCRN) are cytoplasmic. Residues 952 to 970 (YFNLLDMLVVGVSLVSFGI) traverse the membrane as a helical segment. At 971-976 (QSSAIS) the chain is on the extracellular side. A helical membrane pass occupies residues 977–996 (VVKILRVLRVLRPLRAINRA). Topologically, residues 997–1015 (KGLKHVVQCVFVAIRTIGN) are cytoplasmic. The chain crosses the membrane as a helical span at residues 1016–1035 (IMIVTTLLQFMFACIGVQLF). Residues 1036–1125 (KGKFYRCTDE…AGPVYNHRVE (90 aa)) are Extracellular-facing. The interval 1073–1163 (RIWQNSDFNF…QEQGEKEYKN (91 aa)) is dihydropyridine binding. Glutamate 1099 contacts Ca(2+). The helical transmembrane segment at 1126–1146 (ISIFFIIYIIIVAFFMMNIFV) threads the bilayer. The Cytoplasmic portion of the chain corresponds to 1147–1203 (GFVIVTFQEQGEKEYKNCELDKNQRQCVEYALKARPLRRYIPKNPYQYKFWYVVNSS). The IV repeat unit spans residues 1190 to 1465 (NPYQYKFWYV…LFVAVIMDNF (276 aa)). Residues 1204-1222 (PFEYMMFVLIMLNTLCLAM) form a helical membrane-spanning segment. At 1223–1237 (QHYEQSKMFNDAMDI) the chain is on the extracellular side. A helical transmembrane segment spans residues 1238–1257 (LNMVFTGVFTVEMVLKVIAF). Residues 1258 to 1264 (KPKGYFS) lie on the Cytoplasmic side of the membrane. Residues 1265–1286 (DAWNTFDSLIVIGSIIDVALSE) form a helical membrane-spanning segment. The Extracellular segment spans residues 1287-1311 (ADPTESESLPLPTATPGNSEESNRI). Residues 1312–1331 (SITFFRLFRVMRLVKLLSRG) traverse the membrane as a helical segment. The Cytoplasmic portion of the chain corresponds to 1332 to 1350 (EGIRTLLWTFIKSFQALPY). The chain crosses the membrane as a helical span at residues 1351–1370 (VALLIAMLFFIYAVIGMQMF). Residues 1371–1437 (GKVAMRDNNQ…GEEYTCGSNF (67 aa)) are Extracellular-facing. The interval 1418–1484 (LCDPDSDYNP…LGPHHLDEFK (67 aa)) is dihydropyridine binding. The interval 1430–1473 (EYTCGSNFAIVYFISFYMLCAFLIINLFVAVIMDNFDYLTRDWS) is phenylalkylamine binding. Residues 1438–1462 (AIVYFISFYMLCAFLIINLFVAVIM) traverse the membrane as a helical segment. The Cytoplasmic portion of the chain corresponds to 1463-1610 (DNFDYLTRDW…CFLSPSRSRS (148 aa)).

It belongs to the calcium channel alpha-1 subunit (TC 1.A.1.11) family. CACNA1D subfamily. Voltage-dependent calcium channels are multisubunit complexes, consisting of alpha-1, alpha-2, beta and delta subunits in a 1:1:1:1 ratio. The channel activity is directed by the pore-forming and voltage-sensitive alpha-1 subunit. In many cases, this subunit is sufficient to generate voltage-sensitive calcium channel activity. The auxiliary subunits beta and alpha-2/delta linked by a disulfide bridge regulate the channel activity. Interacts with RIMBP2. Interacts with CABP1 and CABP4, resulting in a near elimination of calcium-dependent inactivation of the channel. In terms of tissue distribution, expressed in brain, heart and skeletal muscle.

It is found in the membrane. The catalysed reaction is Ca(2+)(in) = Ca(2+)(out). Voltage-sensitive calcium channels (VSCC) mediate the entry of calcium ions into excitable cells and are also involved in a variety of calcium-dependent processes, including muscle contraction, hormone or neurotransmitter release, gene expression, cell motility, cell division and cell death. The isoform alpha-1D gives rise to L-type calcium currents. Long-lasting (L-type) calcium channels belong to the 'high-voltage activated' (HVA) group. They are blocked by dihydropyridines (DHP), phenylalkylamines, and by benzothiazepines. The polypeptide is Voltage-dependent L-type calcium channel subunit alpha-1D (CACNA1D) (Mesocricetus auratus (Golden hamster)).